The primary structure comprises 158 residues: Glycine/sarcosine/betaine reductase complex component A1 (158 aa).

U46 is a catalytic residue. Position 46 (U46) is a non-standard amino acid, selenocysteine.

The protein belongs to the GrdA family. As to quaternary structure, monomer. Component of the glycine, sarcosine and betaine reductase complexes, together with components B and C.

It carries out the reaction acetyl phosphate + [thioredoxin]-disulfide + NH4(+) + H2O = [thioredoxin]-dithiol + glycine + phosphate + H(+). It catalyses the reaction acetyl phosphate + methylamine + [thioredoxin]-disulfide + H2O = sarcosine + [thioredoxin]-dithiol + phosphate + H(+). The catalysed reaction is acetyl phosphate + trimethylamine + [thioredoxin]-disulfide + H2O = glycine betaine + [thioredoxin]-dithiol + phosphate + H(+). In terms of biological role, in the first step of glycine, betaine and sarcosine reductases, the substrate is bound to component PB via a Schiff base intermediate. Then the PB-activated substrate is nucleophilically attacked by the selenol anion of component PA to transform it to a carboxymethylated selenoether and the respective amine. By action of component PC, acetyl phosphate is formed, leaving component PA in its oxidized state. Finally component PA becomes reduced by the thioredoxin system to start a new catalytic cycle of reductive deamination. In Photobacterium profundum (strain SS9), this protein is Glycine/sarcosine/betaine reductase complex component A1 (grdA1).